Reading from the N-terminus, the 131-residue chain is MRNAKGFTLIELLIVIAIIAILAAVLIPNLLAARKRANDTVVTAYLNDAVKFQEMYQIDNNSYTSNQAALISLGLKSTPANVTFSIVSASANSYCMIAGHSGGTVWFAATPDKGVYKTNTAVTSSQPESCP.

A propeptide spans 1–6 (MRNAKG) (leader sequence). Position 7 is an N-methylphenylalanine (Phe-7). The chain crosses the membrane as a helical span at residues 7–27 (FTLIELLIVIAIIAILAAVLI). The cysteines at positions 95 and 130 are disulfide-linked.

In terms of assembly, interacts with PilQ. Found in three forms of 14-kDa, 18-kDa and a glycosylated 23-kDa form. Both narrow and wide pili are glycosylated.

The protein localises to the cell inner membrane. It localises to the cell outer membrane. Its subcellular location is the periplasm. In terms of biological role, plays an essential role in the assembly of two types of T4P pili: a wide and a narrow that participate in natural transformation and twitching motility. Major component of the wide pilus that is essential for natural transformation working as a DNA translocator structure that spans the inner and outer membranes. In addition, participates in the assembly of the narrow pilus composed of the PilA5 subunit that is required for twitching motility. The chain is Type IV wide pilus major component PilA4 (pilA4) from Thermus thermophilus (strain ATCC BAA-163 / DSM 7039 / HB27).